Consider the following 145-residue polypeptide: Large ribosomal subunit protein uL16 (145 aa).

A compositionally biased stretch (basic residues) spans Met1–Met17. Positions Met1–Thr22 are disordered.

Belongs to the universal ribosomal protein uL16 family. As to quaternary structure, part of the 50S ribosomal subunit.

Binds 23S rRNA and is also seen to make contacts with the A and possibly P site tRNAs. This Ruminiclostridium cellulolyticum (strain ATCC 35319 / DSM 5812 / JCM 6584 / H10) (Clostridium cellulolyticum) protein is Large ribosomal subunit protein uL16.